A 1503-amino-acid polypeptide reads, in one-letter code: ABC multidrug transporter MDR3 (1503 aa).

Residues 1 to 46 (MAPTEEANVTKPTGELRPDEKLNYEEDVKCSGSSSTTVGKTAYDTD) form a disordered region. N-linked (GlcNAc...) asparagine glycosylation is present at Asn8. Over residues 14 to 29 (GELRPDEKLNYEEDVK) the composition is skewed to basic and acidic residues. The ABC transporter 1 domain occupies 153–408 (LKAWSGIMSM…FIEMGFDCPS (256 aa)). 2 N-linked (GlcNAc...) asparagine glycosylation sites follow: Asn332 and Asn463. A run of 5 helical transmembrane segments spans residues 519–539 (MTLT…SVFY), 554–574 (LLFF…LTLW), 599–619 (ILVD…IIYF), 628–648 (GHFF…SNVF), and 662–682 (LVPT…TIPV). An N-linked (GlcNAc...) asparagine glycan is attached at Asn729. The chain crosses the membrane as a helical span at residues 771–791 (GIIVAFFLFFLFVYITATELV). Positions 816-838 (KKKQDPEAASTQEKQPVETSGHD) are disordered. Positions 824–833 (ASTQEKQPVE) are enriched in polar residues. Residues 850–1093 (FHWESVCYDI…LIEYFESKGA (244 aa)) enclose the ABC transporter 2 domain. Residue 886–893 (GVSGAGKT) participates in ATP binding. Transmembrane regions (helical) follow at residues 1186 to 1206 (YIYS…FTFY), 1222 to 1242 (IFMF…YFVI), 1259 to 1279 (WIAF…LLTV), 1310 to 1330 (LLIL…IAGI), 1346 to 1366 (LTLV…FWIF), and 1458 to 1478 (IGIL…LYWL). Asn1499 carries N-linked (GlcNAc...) asparagine glycosylation.

This sequence belongs to the ABC transporter superfamily. ABCG family. PDR (TC 3.A.1.205) subfamily.

The protein resides in the cell membrane. It carries out the reaction itraconazole(in) + ATP + H2O = itraconazole(out) + ADP + phosphate + H(+). The catalysed reaction is voriconazole(in) + ATP + H2O = voriconazole(out) + ADP + phosphate + H(+). It catalyses the reaction fluconazole(in) + ATP + H2O = fluconazole(out) + ADP + phosphate + H(+). The enzyme catalyses (2R,4S)-ketoconazole(in) + ATP + H2O = (2R,4S)-ketoconazole(out) + ADP + phosphate + H(+). It carries out the reaction (2S,4R)-ketoconazole(in) + ATP + H2O = (2S,4R)-ketoconazole(out) + ADP + phosphate + H(+). The catalysed reaction is (R)-miconazole(in) + ATP + H2O = (R)-miconazole(out) + ADP + phosphate + H(+). It catalyses the reaction (S)-miconazole(in) + ATP + H2O = (S)-miconazole(out) + ADP + phosphate + H(+). Azole transport activity is inhibited by milbemycin oxime. Functionally, pleiotropic ABC efflux transporter involved in the modulation susceptibility to azoles, including fluconazole, itraconazole, ketoconazole, miconazole and voriconazole. The protein is ABC multidrug transporter MDR3 of Trichophyton rubrum (strain ATCC MYA-4607 / CBS 118892) (Athlete's foot fungus).